Reading from the N-terminus, the 299-residue chain is MCTVCGCGTSAIEGHTHEVGDDGHGHHHHDGHHDHDHDHDHHRGDHEHDDHHHAEDGSVHYSKGIAGVHVPGMSQERIIQVEKDILSKNDAYAAENRRHFERQGVFALNFVSSPGSGKTSLLVRTIKDLKDRLSISVIEGDQQTSNDAARIRETGARAIQINTGKGCHLDAHMVGHAVEDLAPEPGSALFIENVGNLVCPAAFDLGEAHKVVVLSVTEGEDKPLKYPDMFAAADLMILNKADLLPHLDFNTGFCIANALRVNPRLQTLTVSARTGEGMEAFYAWLEVSAARRAIRSKVA.

Positions 2, 5, and 7 each coordinate Ni(2+). Positions 18–57 (EVGDDGHGHHHHDGHHDHDHDHDHHRGDHEHDDHHHAEDG) are disordered. Over residues 31–57 (GHHDHDHDHDHHRGDHEHDDHHHAEDG) the composition is skewed to basic and acidic residues. The G-domain stretch occupies residues 107-268 (ALNFVSSPGS…LRVNPRLQTL (162 aa)). Ni(2+)-binding residues include C167, H168, and C199. Zn(2+) is bound by residues C167, H168, and C199.

The protein belongs to the SIMIBI class G3E GTPase family. HypB/HupM subfamily.

Involved in the maturation of [NiFe] hydrogenases. Required for nickel insertion into the metal center of the hydrogenase. Exhibits a low intrinsic GTPase activity, which is essential for nickel insertion. Is able to bind 4 nickel ions per subunit. Can also bind zinc. This Rhizobium leguminosarum bv. viciae protein is Hydrogenase maturation factor HypB.